A 125-amino-acid polypeptide reads, in one-letter code: MPTISQLIGSERKRLTRKTKSPALKSCPERRGVCTRVYTSTPKKPNSALRKVARVRLTSGFEVTAYIPGIGHNLQEHSVVLLRGGRVKDLPGVRYHIIRGTLDTAGVKDRRQSRSKYGAKAPKNN.

The disordered stretch occupies residues 1–28 (MPTISQLIGSERKRLTRKTKSPALKSCP). Asp89 bears the 3-methylthioaspartic acid mark. Residues 104–125 (TAGVKDRRQSRSKYGAKAPKNN) form a disordered region.

This sequence belongs to the universal ribosomal protein uS12 family. As to quaternary structure, part of the 30S ribosomal subunit. Contacts proteins S8 and S17. May interact with IF1 in the 30S initiation complex.

Functionally, with S4 and S5 plays an important role in translational accuracy. Interacts with and stabilizes bases of the 16S rRNA that are involved in tRNA selection in the A site and with the mRNA backbone. Located at the interface of the 30S and 50S subunits, it traverses the body of the 30S subunit contacting proteins on the other side and probably holding the rRNA structure together. The combined cluster of proteins S8, S12 and S17 appears to hold together the shoulder and platform of the 30S subunit. This is Small ribosomal subunit protein uS12 from Prochlorococcus marinus (strain MIT 9515).